We begin with the raw amino-acid sequence, 622 residues long: 1-deoxy-D-xylulose-5-phosphate synthase (622 aa).

Thiamine diphosphate is bound by residues histidine 74 and 115–117 (GHS). Aspartate 146 provides a ligand contact to Mg(2+). Thiamine diphosphate-binding positions include 147–148 (GA), asparagine 175, tyrosine 286, and glutamate 366. Residue asparagine 175 participates in Mg(2+) binding.

The protein belongs to the transketolase family. DXPS subfamily. As to quaternary structure, homodimer. It depends on Mg(2+) as a cofactor. Requires thiamine diphosphate as cofactor.

The catalysed reaction is D-glyceraldehyde 3-phosphate + pyruvate + H(+) = 1-deoxy-D-xylulose 5-phosphate + CO2. It participates in metabolic intermediate biosynthesis; 1-deoxy-D-xylulose 5-phosphate biosynthesis; 1-deoxy-D-xylulose 5-phosphate from D-glyceraldehyde 3-phosphate and pyruvate: step 1/1. Its function is as follows. Catalyzes the acyloin condensation reaction between C atoms 2 and 3 of pyruvate and glyceraldehyde 3-phosphate to yield 1-deoxy-D-xylulose-5-phosphate (DXP). This chain is 1-deoxy-D-xylulose-5-phosphate synthase, found in Carboxydothermus hydrogenoformans (strain ATCC BAA-161 / DSM 6008 / Z-2901).